The following is a 548-amino-acid chain: Polynucleotide 5'-hydroxyl-kinase nol-9 (548 aa).

An ATP-binding site is contributed by 186–193 (GHKGAGKS).

This sequence belongs to the Clp1 family. NOL9/GRC3 subfamily.

The protein localises to the nucleus. Its subcellular location is the nucleolus. Functionally, polynucleotide 5'-kinase involved in rRNA processing. This Caenorhabditis briggsae protein is Polynucleotide 5'-hydroxyl-kinase nol-9 (nol-9).